Consider the following 307-residue polypeptide: MIRQRTLKSTVKATGVGLHGGRKVNLVLRPAAPDTGIVFHRVDLDPPLDLPADPYAVCDTRMCSGLEKGGQKVGTVEHLMSALAGLGIDNLHIDVDAPEIPILDGSSGPFVFLLQSAGIEEQKAPKRFLRVKKPVEYREGDKWVRLEPYDGFRLDFSIVFNHPAIDSTSTAVSIDFATHSYVRDVARARTFGFMQDVEFMRANGLALGGSLENAIVMDEYRVLNADGLRYADEFVKHKVLDAIGDLYLCGHPLLARYSAHKSGHALNNQILRVLLEDRSAWEIVSFEREAATPPAVAHQFAPVLAAA.

Zn(2+)-binding residues include His-78, His-237, and Asp-241. The Proton donor role is filled by His-264.

This sequence belongs to the LpxC family. Zn(2+) is required as a cofactor.

It carries out the reaction a UDP-3-O-[(3R)-3-hydroxyacyl]-N-acetyl-alpha-D-glucosamine + H2O = a UDP-3-O-[(3R)-3-hydroxyacyl]-alpha-D-glucosamine + acetate. It functions in the pathway glycolipid biosynthesis; lipid IV(A) biosynthesis; lipid IV(A) from (3R)-3-hydroxytetradecanoyl-[acyl-carrier-protein] and UDP-N-acetyl-alpha-D-glucosamine: step 2/6. Functionally, catalyzes the hydrolysis of UDP-3-O-myristoyl-N-acetylglucosamine to form UDP-3-O-myristoylglucosamine and acetate, the committed step in lipid A biosynthesis. This chain is UDP-3-O-acyl-N-acetylglucosamine deacetylase, found in Azoarcus sp. (strain BH72).